A 413-amino-acid chain; its full sequence is Tubby-like F-box protein 6 (413 aa).

In terms of domain architecture, F-box spans 67–122 (SIWVDLPPELLLDIIQRIESEQSLWPGRRDVVACASVCKSWREMTKEVVKVPELSG).

This sequence belongs to the TUB family. As to expression, ubiquitous, with higher levels in flowers.

The sequence is that of Tubby-like F-box protein 6 from Arabidopsis thaliana (Mouse-ear cress).